The following is a 136-amino-acid chain: Large ribosomal subunit protein uL16 (136 aa).

The protein belongs to the universal ribosomal protein uL16 family. As to quaternary structure, part of the 50S ribosomal subunit.

Its function is as follows. Binds 23S rRNA and is also seen to make contacts with the A and possibly P site tRNAs. The chain is Large ribosomal subunit protein uL16 from Vesicomyosocius okutanii subsp. Calyptogena okutanii (strain HA).